Consider the following 556-residue polypeptide: Dihydroxy-acid dehydratase (556 aa).

Asp-81 lines the Mg(2+) pocket. Residue Cys-122 coordinates [2Fe-2S] cluster. Positions 123 and 124 each coordinate Mg(2+). N6-carboxylysine is present on Lys-124. Position 196 (Cys-196) interacts with [2Fe-2S] cluster. A Mg(2+)-binding site is contributed by Glu-444. Ser-470 acts as the Proton acceptor in catalysis.

It belongs to the IlvD/Edd family. As to quaternary structure, homodimer. [2Fe-2S] cluster is required as a cofactor. Requires Mg(2+) as cofactor.

The catalysed reaction is (2R)-2,3-dihydroxy-3-methylbutanoate = 3-methyl-2-oxobutanoate + H2O. It catalyses the reaction (2R,3R)-2,3-dihydroxy-3-methylpentanoate = (S)-3-methyl-2-oxopentanoate + H2O. It participates in amino-acid biosynthesis; L-isoleucine biosynthesis; L-isoleucine from 2-oxobutanoate: step 3/4. The protein operates within amino-acid biosynthesis; L-valine biosynthesis; L-valine from pyruvate: step 3/4. Functionally, functions in the biosynthesis of branched-chain amino acids. Catalyzes the dehydration of (2R,3R)-2,3-dihydroxy-3-methylpentanoate (2,3-dihydroxy-3-methylvalerate) into 2-oxo-3-methylpentanoate (2-oxo-3-methylvalerate) and of (2R)-2,3-dihydroxy-3-methylbutanoate (2,3-dihydroxyisovalerate) into 2-oxo-3-methylbutanoate (2-oxoisovalerate), the penultimate precursor to L-isoleucine and L-valine, respectively. The chain is Dihydroxy-acid dehydratase from Syntrophotalea carbinolica (strain DSM 2380 / NBRC 103641 / GraBd1) (Pelobacter carbinolicus).